A 350-amino-acid polypeptide reads, in one-letter code: Galactokinase (350 aa).

14–17 is a substrate binding site; the sequence is EHTD. ATP contacts are provided by residues serine 46 and 96-102; that span reads GAGLSSS. 2 residues coordinate Mg(2+): serine 102 and glutamate 134. The active-site Proton acceptor is the aspartate 146. Residue tyrosine 196 participates in substrate binding.

It belongs to the GHMP kinase family. GalK subfamily.

The protein resides in the cytoplasm. It carries out the reaction alpha-D-galactose + ATP = alpha-D-galactose 1-phosphate + ADP + H(+). The protein operates within carbohydrate metabolism; galactose metabolism. Its function is as follows. Catalyzes the transfer of the gamma-phosphate of ATP to D-galactose to form alpha-D-galactose-1-phosphate (Gal-1-P). This is Galactokinase from Thermotoga neapolitana (strain ATCC 49049 / DSM 4359 / NBRC 107923 / NS-E).